The chain runs to 341 residues: Heat-inducible transcription repressor HrcA (341 aa).

This sequence belongs to the HrcA family.

In terms of biological role, negative regulator of class I heat shock genes (grpE-dnaK-dnaJ and groELS operons). Prevents heat-shock induction of these operons. The sequence is that of Heat-inducible transcription repressor HrcA from Corynebacterium glutamicum (strain ATCC 13032 / DSM 20300 / JCM 1318 / BCRC 11384 / CCUG 27702 / LMG 3730 / NBRC 12168 / NCIMB 10025 / NRRL B-2784 / 534).